We begin with the raw amino-acid sequence, 129 residues long: Histone H2A.J (129 aa).

The disordered stretch occupies residues 1-22 (MSGRGKQGGKVRAKAKSRSSRA). 2 positions are modified to N6-acetyllysine: lysine 6 and lysine 10. Residues 7 to 19 (QGGKVRAKAKSRS) are compositionally biased toward basic residues. Lysine 10 is subject to N6-lactoyllysine; alternate. N5-methylglutamine is present on glutamine 105. The residue at position 121 (threonine 121) is a Phosphothreonine; by DCAF1.

Belongs to the histone H2A family. The nucleosome is a histone octamer containing two molecules each of H2A, H2B, H3 and H4 assembled in one H3-H4 heterotetramer and two H2A-H2B heterodimers. The octamer wraps approximately 147 bp of DNA. Monoubiquitination of Lys-120 (H2AXK119ub) gives a specific tag for epigenetic transcriptional repression. Following DNA double-strand breaks (DSBs), it is ubiquitinated through 'Lys-63' linkage of ubiquitin moieties. In terms of processing, glutamine methylation at Gln-105 (H2AQ104me) by FBL is specifically dedicated to polymerase I. It is present at 35S ribosomal DNA locus and impairs binding of the FACT complex. Post-translationally, phosphorylation on Ser-2 (H2AS1ph) is enhanced during mitosis. Phosphorylation on Ser-2 by RPS6KA5/MSK1 directly represses transcription. Acetylation of H3 inhibits Ser-2 phosphorylation by RPS6KA5/MSK1. Phosphorylation at Thr-121 (H2AT120ph) by DCAF1 is present in the regulatory region of many tumor suppresor genes and down-regulates their transcription.

The protein resides in the nucleus. It is found in the chromosome. Core component of nucleosome. Nucleosomes wrap and compact DNA into chromatin, limiting DNA accessibility to the cellular machineries which require DNA as a template. Histones thereby play a central role in transcription regulation, DNA repair, DNA replication and chromosomal stability. DNA accessibility is regulated via a complex set of post-translational modifications of histones, also called histone code, and nucleosome remodeling. The protein is Histone H2A.J of Mus musculus (Mouse).